We begin with the raw amino-acid sequence, 795 residues long: Lon protease 1 (795 aa).

The 196-residue stretch at 9–204 (LPVLPLRNTV…RVLALLLRDL (196 aa)) folds into the Lon N-terminal domain. 360-367 (GPPGVGKT) serves as a coordination point for ATP. The Lon proteolytic domain maps to 596 to 777 (EPQVGAAQGL…GEVLKLLLLP (182 aa)). Residues Ser-683 and Lys-726 contribute to the active site.

Belongs to the peptidase S16 family. In terms of assembly, homohexamer. Organized in a ring with a central cavity.

The protein resides in the cytoplasm. The catalysed reaction is Hydrolysis of proteins in presence of ATP.. Its function is as follows. ATP-dependent serine protease that mediates the selective degradation of mutant and abnormal proteins as well as certain short-lived regulatory proteins. Required for cellular homeostasis and for survival from DNA damage and developmental changes induced by stress. Degrades polypeptides processively to yield small peptide fragments that are 5 to 10 amino acids long. Binds to DNA in a double-stranded, site-specific manner. The chain is Lon protease 1 from Thermus thermophilus (strain ATCC BAA-163 / DSM 7039 / HB27).